The following is a 167-amino-acid chain: uncharacterized protein (167 aa).

The next 4 membrane-spanning stretches (helical) occupy residues 13 to 33 (LIYL…TWLI), 37 to 57 (VLAV…FLPY), 61 to 81 (WFAL…KIGE), and 103 to 123 (LLLI…LVPS).

Its subcellular location is the cell membrane. This is an uncharacterized protein from Haemophilus influenzae (strain ATCC 51907 / DSM 11121 / KW20 / Rd).